Reading from the N-terminus, the 449-residue chain is Trigger factor (449 aa).

Positions 169-254 (GDRITVDFVG…AKQVEAPGEL (86 aa)) constitute a PPIase FKBP-type domain.

Belongs to the FKBP-type PPIase family. Tig subfamily.

It localises to the cytoplasm. The enzyme catalyses [protein]-peptidylproline (omega=180) = [protein]-peptidylproline (omega=0). In terms of biological role, involved in protein export. Acts as a chaperone by maintaining the newly synthesized protein in an open conformation. Functions as a peptidyl-prolyl cis-trans isomerase. The polypeptide is Trigger factor (Azorhizobium caulinodans (strain ATCC 43989 / DSM 5975 / JCM 20966 / LMG 6465 / NBRC 14845 / NCIMB 13405 / ORS 571)).